The sequence spans 405 residues: S-adenosylmethionine synthase (405 aa).

ATP is bound at residue His-19. Asp-21 provides a ligand contact to Mg(2+). Glu-47 contacts K(+). Positions 60 and 103 each coordinate L-methionine. A flexible loop region spans residues 103–113; that stretch reads QSADIAQGVDK. ATP is bound by residues 179-181, 246-247, Asp-255, 261-262, Ala-278, and Lys-282; these read DGK, RF, and RK. L-methionine is bound at residue Asp-255. Lys-286 contributes to the L-methionine binding site.

Belongs to the AdoMet synthase family. Homotetramer; dimer of dimers. Requires Mg(2+) as cofactor. It depends on K(+) as a cofactor.

It is found in the cytoplasm. It catalyses the reaction L-methionine + ATP + H2O = S-adenosyl-L-methionine + phosphate + diphosphate. The protein operates within amino-acid biosynthesis; S-adenosyl-L-methionine biosynthesis; S-adenosyl-L-methionine from L-methionine: step 1/1. In terms of biological role, catalyzes the formation of S-adenosylmethionine (AdoMet) from methionine and ATP. The overall synthetic reaction is composed of two sequential steps, AdoMet formation and the subsequent tripolyphosphate hydrolysis which occurs prior to release of AdoMet from the enzyme. The chain is S-adenosylmethionine synthase from Shouchella clausii (strain KSM-K16) (Alkalihalobacillus clausii).